The chain runs to 356 residues: 3-dehydroquinate synthase (356 aa).

NAD(+) contacts are provided by residues 71-76 (EGEASK), 105-109 (GVTGD), 129-130 (TS), lysine 142, and lysine 151. Zn(2+) contacts are provided by glutamate 184, histidine 247, and histidine 264.

It belongs to the sugar phosphate cyclases superfamily. Dehydroquinate synthase family. Requires Co(2+) as cofactor. The cofactor is Zn(2+). It depends on NAD(+) as a cofactor.

It localises to the cytoplasm. It carries out the reaction 7-phospho-2-dehydro-3-deoxy-D-arabino-heptonate = 3-dehydroquinate + phosphate. Its pathway is metabolic intermediate biosynthesis; chorismate biosynthesis; chorismate from D-erythrose 4-phosphate and phosphoenolpyruvate: step 2/7. Catalyzes the conversion of 3-deoxy-D-arabino-heptulosonate 7-phosphate (DAHP) to dehydroquinate (DHQ). The chain is 3-dehydroquinate synthase from Lactococcus lactis subsp. cremoris (strain SK11).